Reading from the N-terminus, the 138-residue chain is Small ribosomal subunit protein uS11c (138 aa).

The disordered stretch occupies residues 1–22 (MAKPILRIGSRKNTRSGSRKNV). Residues 9-22 (GSRKNTRSGSRKNV) are compositionally biased toward basic residues.

This sequence belongs to the universal ribosomal protein uS11 family. Part of the 30S ribosomal subunit.

The protein localises to the plastid. The protein resides in the chloroplast. The chain is Small ribosomal subunit protein uS11c from Arabis hirsuta (Hairy rock-cress).